The following is a 462-amino-acid chain: Na(+)/H(+) antiporter NhaA 2 (462 aa).

The segment at 1–31 is disordered; it reads MKSSTREQTPVTSPTPHDPTPPTPPRGSTPL. Residues 16–27 are compositionally biased toward pro residues; it reads PHDPTPPTPPRG. The next 11 helical transmembrane spans lie at 52-72, 96-116, 134-154, 165-185, 195-215, 218-238, 244-264, 309-329, 337-357, 382-402, and 408-428; these read IGGA…NSPW, LTLG…IAGL, LVPV…YVLV, GWAI…AVIS, FLLT…AIFY, TLAV…GLLV, SWWL…ASGI, FAVP…LSGL, VALG…LGAT, LLGG…FGAG, and HVKV…AVVL.

It belongs to the NhaA Na(+)/H(+) (TC 2.A.33) antiporter family.

It is found in the cell membrane. The enzyme catalyses Na(+)(in) + 2 H(+)(out) = Na(+)(out) + 2 H(+)(in). Functionally, na(+)/H(+) antiporter that extrudes sodium in exchange for external protons. The polypeptide is Na(+)/H(+) antiporter NhaA 2 (Kineococcus radiotolerans (strain ATCC BAA-149 / DSM 14245 / SRS30216)).